Consider the following 350-residue polypeptide: MSTSAAPGKLATTLGANVSSLASKVRSTSSTQQSLMQSVKRIIPPLSSAKHKGQAGRIGIVGGSRDYTGAPFFASMSSMRFGCDMSYTICTPEAGNVIKTYSPDLIVNRLLDASVEWSQVERSVDELFARFHAVVIGPGLGRDEFMQKCAKLCIGLARKHDMYLVVDADGLWLLQNEPDLIKGYKKAILTPNVAEFGRLCDTLGIDCKQEPDSAAKKLAQALEGPTVLEKGPVDRITNGKEVLYVDLQGGLKRCGGQGDVLAGCLGTLAGWAKIYQDENPTLPARSTTTDGDLIAEDRLLLLAGYAASVTARTCSRLAFAKSKRAMLADDLLPEVGRAYEELWGDVQALL.

A YjeF C-terminal domain is found at 35 to 342 (LMQSVKRIIP…PEVGRAYEEL (308 aa)). (6S)-NADPHX-binding positions include Gly-139 and 192 to 198 (NVAEFGR). Residues 230-234 (KGPVD) and 249-258 (GGLKRCGGQG) contribute to the ATP site. Residue Asp-259 participates in (6S)-NADPHX binding.

This sequence belongs to the NnrD/CARKD family. The cofactor is Mg(2+).

The protein localises to the cytoplasm. The enzyme catalyses (6S)-NADHX + ATP = ADP + phosphate + NADH + H(+). It catalyses the reaction (6S)-NADPHX + ATP = ADP + phosphate + NADPH + H(+). Functionally, catalyzes the dehydration of the S-form of NAD(P)HX at the expense of ATP, which is converted to ADP. Together with NAD(P)HX epimerase, which catalyzes the epimerization of the S- and R-forms, the enzyme allows the repair of both epimers of NAD(P)HX, a damaged form of NAD(P)H that is a result of enzymatic or heat-dependent hydration. This is ATP-dependent (S)-NAD(P)H-hydrate dehydratase from Mycosarcoma maydis (Corn smut fungus).